The sequence spans 228 residues: 2-C-methyl-D-erythritol 4-phosphate cytidylyltransferase (228 aa).

The protein belongs to the IspD/TarI cytidylyltransferase family. IspD subfamily.

It carries out the reaction 2-C-methyl-D-erythritol 4-phosphate + CTP + H(+) = 4-CDP-2-C-methyl-D-erythritol + diphosphate. The protein operates within isoprenoid biosynthesis; isopentenyl diphosphate biosynthesis via DXP pathway; isopentenyl diphosphate from 1-deoxy-D-xylulose 5-phosphate: step 2/6. Its function is as follows. Catalyzes the formation of 4-diphosphocytidyl-2-C-methyl-D-erythritol from CTP and 2-C-methyl-D-erythritol 4-phosphate (MEP). This is 2-C-methyl-D-erythritol 4-phosphate cytidylyltransferase from Actinobacillus pleuropneumoniae serotype 5b (strain L20).